The following is a 325-amino-acid chain: MNIVVLAGGRSAERQVSWVTGKACKRALEDLGHRVKVIDPDEDLPLRLWQERQAGCDFVWIALHGPGGEDGVVQGMLDWLGLPYQGSGPLASALAMDKLVSKQIFRAAGIPTPDWQVWDDQNPLTWADCAAELGSPLVIKPSNNGSTVGISIVRDERSFAQGLELARSVSSRIFLERYVPGKEITLSILSGQVLPAIEIIPAQGDFYDYEAKYAPGGSRHLIPCSLSPAGLARCEAAGLKAYQALGCEGLARVDLRVDPEENPWVLEVNTLPGMTPTSLCPDAAAALGWTFTELVERMLQDALQKAQLTGSRHPQSSSATLGNAP.

One can recognise an ATP-grasp domain in the interval 102–300 (KQIFRAAGIP…FTELVERMLQ (199 aa)). 130-185 (AAELGSPLVIKPSNNGSTVGISIVRDERSFAQGLELARSVSSRIFLERYVPGKEIT) contacts ATP. Positions 254, 267, and 269 each coordinate Mg(2+).

Belongs to the D-alanine--D-alanine ligase family. Mg(2+) serves as cofactor. The cofactor is Mn(2+).

It is found in the cytoplasm. The catalysed reaction is 2 D-alanine + ATP = D-alanyl-D-alanine + ADP + phosphate + H(+). It participates in cell wall biogenesis; peptidoglycan biosynthesis. Cell wall formation. The chain is D-alanine--D-alanine ligase from Synechococcus sp. (strain JA-2-3B'a(2-13)) (Cyanobacteria bacterium Yellowstone B-Prime).